A 218-amino-acid chain; its full sequence is Adenylate kinase (218 aa).

10-15 serves as a coordination point for ATP; sequence GAGKGT. An NMP region spans residues 30-59; sequence STGNMLRAAVKAGTPLGLEAKKVMDAGGLV. Residues Thr-31, Arg-36, 57-59, 85-88, and Gln-92 each bind AMP; these read GLV and GFPR. Positions 122 to 159 are LID; the sequence is GRRVHPASGRSYHVRFNPPKAEGVDDVTGEPLVQRDDD. ATP is bound by residues Arg-123 and 132–133; that span reads SY. AMP-binding residues include Arg-156 and Arg-167. Position 203 (Gly-203) interacts with ATP.

Belongs to the adenylate kinase family. In terms of assembly, monomer.

It is found in the cytoplasm. The enzyme catalyses AMP + ATP = 2 ADP. It participates in purine metabolism; AMP biosynthesis via salvage pathway; AMP from ADP: step 1/1. Catalyzes the reversible transfer of the terminal phosphate group between ATP and AMP. Plays an important role in cellular energy homeostasis and in adenine nucleotide metabolism. The sequence is that of Adenylate kinase from Bordetella parapertussis (strain 12822 / ATCC BAA-587 / NCTC 13253).